Consider the following 125-residue polypeptide: Large ribosomal subunit protein bL20 (125 aa).

Belongs to the bacterial ribosomal protein bL20 family.

Binds directly to 23S ribosomal RNA and is necessary for the in vitro assembly process of the 50S ribosomal subunit. It is not involved in the protein synthesizing functions of that subunit. The polypeptide is Large ribosomal subunit protein bL20 (Methylobacterium nodulans (strain LMG 21967 / CNCM I-2342 / ORS 2060)).